The chain runs to 561 residues: Dihydroxy-acid dehydratase (561 aa).

Cys-51 serves as a coordination point for [2Fe-2S] cluster. Asp-83 serves as a coordination point for Mg(2+). A [2Fe-2S] cluster-binding site is contributed by Cys-124. The Mg(2+) site is built by Asp-125 and Lys-126. Lys-126 is modified (N6-carboxylysine). [2Fe-2S] cluster is bound at residue Cys-196. Glu-448 lines the Mg(2+) pocket. The active-site Proton acceptor is the Ser-474.

It belongs to the IlvD/Edd family. Homodimer. It depends on [2Fe-2S] cluster as a cofactor. The cofactor is Mg(2+).

The enzyme catalyses (2R)-2,3-dihydroxy-3-methylbutanoate = 3-methyl-2-oxobutanoate + H2O. It carries out the reaction (2R,3R)-2,3-dihydroxy-3-methylpentanoate = (S)-3-methyl-2-oxopentanoate + H2O. The protein operates within amino-acid biosynthesis; L-isoleucine biosynthesis; L-isoleucine from 2-oxobutanoate: step 3/4. It participates in amino-acid biosynthesis; L-valine biosynthesis; L-valine from pyruvate: step 3/4. Its function is as follows. Functions in the biosynthesis of branched-chain amino acids. Catalyzes the dehydration of (2R,3R)-2,3-dihydroxy-3-methylpentanoate (2,3-dihydroxy-3-methylvalerate) into 2-oxo-3-methylpentanoate (2-oxo-3-methylvalerate) and of (2R)-2,3-dihydroxy-3-methylbutanoate (2,3-dihydroxyisovalerate) into 2-oxo-3-methylbutanoate (2-oxoisovalerate), the penultimate precursor to L-isoleucine and L-valine, respectively. The chain is Dihydroxy-acid dehydratase from Pyrobaculum neutrophilum (strain DSM 2338 / JCM 9278 / NBRC 100436 / V24Sta) (Thermoproteus neutrophilus).